Consider the following 794-residue polypeptide: PAN2-PAN3 deadenylation complex subunit PAN3 (794 aa).

The C3H1-type zinc finger occupies 7-36 (SAKDVLCKNILIYGYCKFQDKGCAFSHNKQ). Disordered stretches follow at residues 40–97 (PQQQ…TQSK) and 187–226 (AQVG…QQQL). Polar residues-rich tracts occupy residues 83–94 (IQSNGMVNSQET) and 189–199 (VGNNPGSTAPA). Positions 200-226 (NLQLQQKQPQQPQQPQQPQQHQQQQQL) are enriched in low complexity. Residues 372–668 (QTMQHLSLPD…MDQFILQYIS (297 aa)) are pseudokinase domain. Residues R425 and 494–501 (DYYPNLTT) contribute to the ATP site. Positions 669-707 (SHFMTLMNKLQNSHDWVELQLSTELENARLFRLMTKINF) form a coiled coil. Residues 708–794 (IISEMPTYDL…IDTQFRLLRG (87 aa)) form a knob domain region.

Belongs to the protein kinase superfamily. PAN3 family. Homodimer. Forms a heterotrimer with a catalytic subunit PAN2 to form the poly(A)-nuclease (PAN) deadenylation complex. Interacts (via PAM-2 motif) with poly(A)-binding protein PAB1 (via PABC domain), conferring substrate specificity of the enzyme complex.

It is found in the cytoplasm. Functionally, regulatory subunit of the poly(A)-nuclease (PAN) deadenylation complex, one of two cytoplasmic mRNA deadenylases involved in mRNA turnover. PAN specifically shortens poly(A) tails of RNA and the activity is stimulated by poly(A)-binding protein PAB1. PAN deadenylation is followed by rapid degradation of the shortened mRNA tails by the CCR4-NOT complex. Deadenylated mRNAs are then degraded by two alternative mechanisms, namely exosome-mediated 3'-5' exonucleolytic degradation, or deadenylation-dependent mRNA decaping and subsequent 5'-3' exonucleolytic degradation by XRN1. May also be involved in post-transcriptional maturation of mRNA poly(A) tails. PAN3 acts as a positive regulator for PAN activity, recruiting the catalytic subunit PAN2 to mRNA via its interaction with RNA and with PAB1. The protein is PAN2-PAN3 deadenylation complex subunit PAN3 of Lodderomyces elongisporus (strain ATCC 11503 / CBS 2605 / JCM 1781 / NBRC 1676 / NRRL YB-4239) (Yeast).